The sequence spans 492 residues: Tyrosine--tRNA ligase, mitochondrial (492 aa).

Tyr-89 contacts L-tyrosine. Residue Asp-93 coordinates ATP. A 'HIGH' region motif is present at residues 94 to 103 (PTAQSLHLGN). Residues Asp-133, Tyr-239, Gln-243, Asp-246, and Gln-265 each contribute to the L-tyrosine site. Residues 303 to 307 (KFGKS) carry the 'KMSKS' region motif. Lys-306 provides a ligand contact to ATP.

This sequence belongs to the class-I aminoacyl-tRNA synthetase family. As to quaternary structure, homodimer.

Its subcellular location is the mitochondrion matrix. The enzyme catalyses tRNA(Tyr) + L-tyrosine + ATP = L-tyrosyl-tRNA(Tyr) + AMP + diphosphate + H(+). In terms of biological role, catalyzes the attachment of tyrosine to tRNA(Tyr) in a two-step reaction: tyrosine is first activated by ATP to form Tyr-AMP and then transferred to the acceptor end of tRNA(Tyr). In Saccharomyces cerevisiae (strain ATCC 204508 / S288c) (Baker's yeast), this protein is Tyrosine--tRNA ligase, mitochondrial (MSY1).